Reading from the N-terminus, the 528-residue chain is Protein spinster homolog 1 (528 aa).

Residues 1–49 (MAGSDTAPFLSQADDPDDGPVPGTPGLPGSTGNPKSEEPEVPDQEGLQR) form a disordered region. A2 carries the N-acetylalanine modification. Transmembrane regions (helical) follow at residues 50–70 (ITGLSPGRSALIVAVLCYINL), 98–118 (GLIQTVFISSYMVLAPVFGYL), 127–147 (LMCGGIAFWSLVTLGSSFIPG), 160–180 (VGVGEASYSTIAPTLIADLFV), 187–207 (MLSIFYFAIPVGSGLGYIAGS), 218–238 (WALRVTPGLGVVAVLLLFLVV), 278–298 (LGFTAVAFVTGSLALWAPAFL), 323–343 (LIFGLITCLTGVLGVGLGVEI), 357–377 (LVCATGLLGSAPFLFLSLACA), 381–401 (IVATYIFIFIGETLLSMNWAI), 421–441 (FQIVLSHLLGDAGSPYLIGLI), and 465–485 (MLCAFVGALGGAAFLGTAIFI). Position 518 is a phosphoserine (S518).

It belongs to the major facilitator superfamily. Spinster (TC 2.A.1.49) family. Interacts with BCL2 and BCL2L1.

It localises to the lysosome membrane. Its subcellular location is the mitochondrion inner membrane. It catalyses the reaction a 1-acyl-sn-glycero-3-phosphocholine(out) + H(+)(out) = a 1-acyl-sn-glycero-3-phosphocholine(in) + H(+)(in). The enzyme catalyses 1-hexadecanoyl-sn-glycero-3-phosphocholine(out) + H(+)(out) = 1-hexadecanoyl-sn-glycero-3-phosphocholine(in) + H(+)(in). It carries out the reaction 1-(9Z-octadecenoyl)-sn-glycero-3-phosphocholine(out) + H(+)(out) = 1-(9Z-octadecenoyl)-sn-glycero-3-phosphocholine(in) + H(+)(in). The catalysed reaction is 1-(5Z,8Z,11Z,14Z-eicosatetraenoyl)-sn-glycero-3-phosphocholine(out) + H(+)(out) = 1-(5Z,8Z,11Z,14Z-eicosatetraenoyl)-sn-glycero-3-phosphocholine(in) + H(+)(in). It catalyses the reaction 1-(4Z,7Z,10Z,13Z,16Z,19Z-docosahexaenoyl)-sn-glycero-3-phosphocholine(out) + H(+)(out) = 1-(4Z,7Z,10Z,13Z,16Z,19Z-docosahexaenoyl)-sn-glycero-3-phosphocholine(in) + H(+)(in). The enzyme catalyses a 1-acyl-sn-glycero-3-phosphoethanolamine(out) + H(+)(out) = a 1-acyl-sn-glycero-3-phosphoethanolamine(in) + H(+)(in). It carries out the reaction 1-(9Z-octadecenoyl)-sn-glycero-3-phosphoethanolamine(out) + H(+)(out) = 1-(9Z-octadecenoyl)-sn-glycero-3-phosphoethanolamine(in) + H(+)(in). The catalysed reaction is 1-acyl-sn-glycero-3-phospho-(1'-sn-glycerol)(out) + H(+)(out) = 1-acyl-sn-glycero-3-phospho-(1'-sn-glycerol)(in) + H(+)(in). It catalyses the reaction 1-(9Z-octadecenoyl)-sn-glycero-3-phospho-(1'-sn-glycerol)(out) + H(+)(out) = 1-(9Z-octadecenoyl)-sn-glycero-3-phospho-(1'-sn-glycerol)(in) + H(+)(in). The enzyme catalyses a 1-O-(1Z-alkenyl)-sn-glycero-3-phosphocholine(out) + H(+)(out) = a 1-O-(1Z-alkenyl)-sn-glycero-3-phosphocholine(in) + H(+)(in). It carries out the reaction 1-(1Z-hexadecenyl)-sn-glycero-3-phosphocholine(out) + H(+)(out) = 1-(1Z-hexadecenyl)-sn-glycero-3-phosphocholine(in) + H(+)(in). The catalysed reaction is a 1-O-(1Z-alkenyl)-sn-glycero-3-phosphoethanolamine(out) + H(+)(out) = a 1-O-(1Z-alkenyl)-sn-glycero-3-phosphoethanolamine(in) + H(+)(in). It catalyses the reaction 1-O-(1Z-hexadecenyl)-sn-glycero-3-phosphoethanolamine(out) + H(+)(out) = 1-O-(1Z-hexadecenyl)-sn-glycero-3-phosphoethanolamine(in) + H(+)(in). Plays a critical role in the phospholipid salvage pathway from lysosomes to the cytosol. Mediates the rate-limiting, proton-dependent, lysosomal efflux of lysophospholipids, which can then be reacylated by acyltransferases in the endoplasmic reticulum to form phospholipids. Selective for zwitterionic headgroups such as lysophosphatidylcholine (LPC) and lysophosphatidylethanolamine (LPE), can also transport lysophosphatidylglycerol (LPG), but not other anionic lysophospholipids, sphingosine, nor sphingomyelin. Transports lysophospholipids with saturated, monounsaturated, and polyunsaturated fatty acids, such as 1-hexadecanoyl-sn-glycero-3-phosphocholine, 1-(9Z-octadecenoyl)-sn-glycero-3-phosphocholine and 1-(4Z,7Z,10Z,13Z,16Z,19Z-docosahexaenoyl)-sn-glycero-3-phosphocholine, respectively. Can also transport lysoplasmalogen (LPC with a fatty alcohol) such as 1-(1Z-hexadecenyl)-sn-glycero-3-phosphocholine. Lysosomal LPC could function as intracellular signaling messenger. Essential player in lysosomal homeostasis. Crucial for cell survival under conditions of nutrient limitation. May be involved in necrotic or autophagic cell death. This chain is Protein spinster homolog 1 (SPNS1), found in Homo sapiens (Human).